Here is a 309-residue protein sequence, read N- to C-terminus: MKKLGTLFVLFLSVIVLVACASGKKDAASGQKLKVVATNSIIADITKNIAGDKIDLHSIVPIGQDPHEYEPLPEDVKKTSEADLIFYNGINLETGGNAWFSKLVENAKKTENKDYFAVSEGVDVIYLEGKNEKGKEDPHAWLNLENGIIFAKNIAKQLSAKDPNNKEFYEKNLKEYTDKLDKLDKESKDKFNNIPAEKKLIVTSEGAFKYFSKAYGVPSAYIWEINTEEEGTPEQIKTLVEKLRQTKVPSLFVESSVDDRPMKTVSQDTNIPIYAQIFTDSIAEQGKEGDSYYNMMKYNLDKIAEGLAK.

The signal sequence occupies residues 1–19 (MKKLGTLFVLFLSVIVLVA). Cys20 carries the N-palmitoyl cysteine lipid modification. Cys20 carries the S-diacylglycerol cysteine lipid modification. Residues His67, His139, Glu205, and Asp280 each coordinate Mn(2+).

This sequence belongs to the bacterial solute-binding protein 9 family. Lipoprotein receptor antigen (Lrai) subfamily.

Its subcellular location is the cell membrane. Part of the ATP-riven (ABC) transport system PsaABC involved in manganese import. Binds manganese with high affinity and specificity and delivers it to the membrane permease for translocation into the cytoplasm. Also acts as an adhesin which is involved on adherence to extracellular matrix. In Streptococcus mitis, this protein is Manganese ABC transporter substrate-binding lipoprotein PsaA (psaA).